The chain runs to 227 residues: Cytidylate kinase (227 aa).

An ATP-binding site is contributed by 12–20 (GPSGAGKGT).

This sequence belongs to the cytidylate kinase family. Type 1 subfamily.

Its subcellular location is the cytoplasm. It carries out the reaction CMP + ATP = CDP + ADP. It catalyses the reaction dCMP + ATP = dCDP + ADP. The polypeptide is Cytidylate kinase (Citrobacter koseri (strain ATCC BAA-895 / CDC 4225-83 / SGSC4696)).